A 393-amino-acid polypeptide reads, in one-letter code: MTCSTSLSGKNRIVLIAGILMIATTLRVTFTGAAPLLDTIRSAYSLTTAQTGLLTTLPLLAFALISPLAAPVARRFGMERSLFAALLLICAGIAIRSLPSPYLLFGGTAVIGGGIALGNVLLPGLIKRDFPHSVARLTGAYSLTMGAAAALGSAMVVPLALNGFGWQGALLMLMCFPLLALFLWLPQWRSQQHANLSTSRALHTRGIWRSPLAWQVTLFLGINSLVYYVIIGWLPAILISHGYSEAQAGSLHGLLQLATAAPGLLIPLFLHHVKDQRGIAAFVALMCAVGAVGLCFMPAHAITWTLLFGFGSGATMILGLTFIGLRASSAHQAAALSGMAQSVGYLLAACGPPLMGKIHDANGNWSVPLMGVAILSLLMAIFGLCAGRDKEIR.

Over 1–12 (MTCSTSLSGKNR) the chain is Cytoplasmic. The chain crosses the membrane as a helical span at residues 13–33 (IVLIAGILMIATTLRVTFTGA). The Periplasmic segment spans residues 34 to 52 (APLLDTIRSAYSLTTAQTG). The helical transmembrane segment at 53–73 (LLTTLPLLAFALISPLAAPVA) threads the bilayer. The Cytoplasmic portion of the chain corresponds to 74-80 (RRFGMER). Helical transmembrane passes span 81–101 (SLFAALLLICAGIAIRSLPSP) and 102–122 (YLLFGGTAVIGGGIALGNVLL). Residues 123-140 (PGLIKRDFPHSVARLTGA) are Cytoplasmic-facing. A helical membrane pass occupies residues 141 to 161 (YSLTMGAAAALGSAMVVPLAL). Residues 162 to 163 (NG) lie on the Periplasmic side of the membrane. A helical transmembrane segment spans residues 164–184 (FGWQGALLMLMCFPLLALFLW). The Cytoplasmic segment spans residues 185-218 (LPQWRSQQHANLSTSRALHTRGIWRSPLAWQVTL). Residues 219–239 (FLGINSLVYYVIIGWLPAILI) traverse the membrane as a helical segment. The Periplasmic portion of the chain corresponds to 240–249 (SHGYSEAQAG). The chain crosses the membrane as a helical span at residues 250–270 (SLHGLLQLATAAPGLLIPLFL). The Cytoplasmic segment spans residues 271–278 (HHVKDQRG). Residues 279 to 299 (IAAFVALMCAVGAVGLCFMPA) form a helical membrane-spanning segment. At 300–304 (HAITW) the chain is on the periplasmic side. A helical transmembrane segment spans residues 305-325 (TLLFGFGSGATMILGLTFIGL). Residues 326 to 334 (RASSAHQAA) lie on the Cytoplasmic side of the membrane. The chain crosses the membrane as a helical span at residues 335 to 355 (ALSGMAQSVGYLLAACGPPLM). The Periplasmic portion of the chain corresponds to 356-366 (GKIHDANGNWS). A helical transmembrane segment spans residues 367-387 (VPLMGVAILSLLMAIFGLCAG). Topologically, residues 388–393 (RDKEIR) are cytoplasmic.

It belongs to the major facilitator superfamily. Cyanate porter (TC 2.A.1.17) family.

It localises to the cell inner membrane. Involved in efflux of 2-nitroimidazole. The protein is 2-nitroimidazole transporter of Escherichia coli (strain K12).